A 388-amino-acid polypeptide reads, in one-letter code: Succinate--CoA ligase [ADP-forming] subunit beta (388 aa).

The 236-residue stretch at 9-244 (KQLFARYGLP…QSQEDPREAQ (236 aa)) folds into the ATP-grasp domain. Residues Lys-46, 53–55 (GRG), Glu-99, Thr-102, and Glu-107 each bind ATP. Residues Asn-199 and Asp-213 each contribute to the Mg(2+) site. Substrate contacts are provided by residues Asn-264 and 321–323 (GIV).

Belongs to the succinate/malate CoA ligase beta subunit family. Heterotetramer of two alpha and two beta subunits. It depends on Mg(2+) as a cofactor.

It carries out the reaction succinate + ATP + CoA = succinyl-CoA + ADP + phosphate. The catalysed reaction is GTP + succinate + CoA = succinyl-CoA + GDP + phosphate. The protein operates within carbohydrate metabolism; tricarboxylic acid cycle; succinate from succinyl-CoA (ligase route): step 1/1. Its function is as follows. Succinyl-CoA synthetase functions in the citric acid cycle (TCA), coupling the hydrolysis of succinyl-CoA to the synthesis of either ATP or GTP and thus represents the only step of substrate-level phosphorylation in the TCA. The beta subunit provides nucleotide specificity of the enzyme and binds the substrate succinate, while the binding sites for coenzyme A and phosphate are found in the alpha subunit. The sequence is that of Succinate--CoA ligase [ADP-forming] subunit beta from Salmonella arizonae (strain ATCC BAA-731 / CDC346-86 / RSK2980).